The following is a 1481-amino-acid chain: Cystic fibrosis transmembrane conductance regulator (1481 aa).

Residues 1-77 (MQRSPLEKAS…KLINALRRCF (77 aa)) lie on the Cytoplasmic side of the membrane. A helical membrane pass occupies residues 78-98 (FWRFMFYGILLYLGEVTKAVQ). The region spanning 81 to 365 (FMFYGILLYL…WAVQTWYDSL (285 aa)) is the ABC transmembrane type-1 1 domain. Residues 99 to 122 (PLLLGRIIASYDPDNKEERSIAIY) lie on the Extracellular side of the membrane. The chain crosses the membrane as a helical span at residues 123–146 (LGIGLCLLFIVRTLLLHPAIFGLH). Residues 147-195 (HIGMQMRIAMFSLIYKKTLKLSSRVLDKISIGQLVSLLSNNLNKFDEGL) lie on the Cytoplasmic side of the membrane. A helical membrane pass occupies residues 196–216 (ALAHFVWIVPLQVALLMGLIW). The Extracellular portion of the chain corresponds to 217 to 222 (ELLQAS). Residues 223 to 243 (AFCGLGFLIVLALFQAGLGRM) form a helical membrane-spanning segment. Topologically, residues 244–298 (MMKYRDQRAGKINERLVITSEMIENIQSVKAYCWEEAMEKMIENLRQTELKLTRK) are cytoplasmic. A helical membrane pass occupies residues 299–319 (AAYVRYFNSSAFFFSGFFVVF). The Extracellular segment spans residues 320–339 (LSVLPYALIKGIVLRKIFTT). A helical membrane pass occupies residues 340 to 358 (ISFCIVLRMAVTRQFPWAV). At 359-858 (QTWYDSLGAI…YLRYITVHKS (500 aa)) the chain is on the cytoplasmic side. Residues tryptophan 401, serine 434, 458 to 465 (GSTGAGKT), and glutamine 493 contribute to the ATP site. The 224-residue stretch at 423–646 (NDDDSLFFSN…RPDFSSKLMG (224 aa)) folds into the ABC transporter 1 domain. Cysteine 524 carries the S-palmitoyl cysteine lipid modification. Phosphoserine is present on residues serine 549 and serine 660. The segment at 654–831 (SAERRNSILT…EEINEEDLKE (178 aa)) is disordered R region. Serine 670 bears the Phosphoserine; by PKA mark. Phosphoserine is present on serine 686. Residue lysine 688 forms a Glycyl lysine isopeptide (Lys-Gly) (interchain with G-Cter in ubiquitin) linkage. Phosphoserine occurs at positions 700 and 712. Phosphothreonine is present on threonine 717. Phosphoserine occurs at positions 737, 753, 768, 790, 795, and 813. The chain crosses the membrane as a helical span at residues 859–879 (LIFVLIWCLVIFLAEVAASLV). Residues 859 to 1155 (LIFVLIWCLV…AVNSSIDVDS (297 aa)) form the ABC transmembrane type-1 2 domain. At 880–918 (VLWFLGNTPPQDKGNSTYSRNNSYAVIITRTSSYYVFYI) the chain is on the extracellular side. Residues asparagine 894 and asparagine 900 are each glycosylated (N-linked (GlcNAc...) asparagine). A discontinuously helical membrane pass occupies residues 919–939 (YVGVADTLLAMGFFRGLPLVH). Over 940-990 (TLITVSKILHHKMLHSVLQAPMSTLNTLKAGGILNRFSKDIAILDDLLPLT) the chain is Cytoplasmic. Residues 991–1011 (IFDFIQLLLIVIGAIAVVAVL) traverse the membrane as a helical segment. Residues 1012 to 1013 (QP) lie on the Extracellular side of the membrane. The helical transmembrane segment at 1014–1034 (YIFVATVPVIVAFIMLRAYFL) threads the bilayer. The Cytoplasmic portion of the chain corresponds to 1035–1095 (QTSQQLKQLE…TANWFLYLST (61 aa)). A helical transmembrane segment spans residues 1096–1116 (LRWFQMRIEMIFVIFFIAVTF). Topologically, residues 1117–1130 (ISILTTGEGEGTVG) are extracellular. A helical transmembrane segment spans residues 1131-1151 (IILTLAMNIMSTLQWAVNSSI). The Cytoplasmic segment spans residues 1152 to 1481 (DVDSLMRSVS…TEEEVQDTRL (330 aa)). Residues 1211–1444 (MTVKDLTAKY…RSLFRQAISP (234 aa)) enclose the ABC transporter 2 domain. ATP-binding positions include tyrosine 1220 and 1245-1252 (GRTGSGKS). Residues 1387–1481 (RTLKQAFADC…TEEEVQDTRL (95 aa)) are interaction with GORASP2. Cysteine 1396 carries the S-palmitoyl cysteine lipid modification. A phosphoserine mark is found at serine 1445 and serine 1457. Positions 1479–1481 (TRL) match the PDZ-binding motif.

Belongs to the ABC transporter superfamily. ABCC family. CFTR transporter (TC 3.A.1.202) subfamily. In terms of assembly, monomer; does not require oligomerization for channel activity. May form oligomers in the membrane. Interacts with SLC26A3, SLC26A6 and NHERF1. Interacts with SHANK2. Interacts with MYO6. Interacts (via C-terminus) with GOPC (via PDZ domain); this promotes CFTR internalization and thereby decreases channel activity. Interacts with SLC4A7 through NHERF1. Found in a complex with MYO5B and RAB11A. Interacts with ANO1. Interacts with SLC26A8. Interacts with AHCYL1; the interaction increases CFTR activity. Interacts with CSE1L. The core-glycosylated form interacts with GORASP2 (via PDZ GRASP-type 1 domain) in respone to ER stress. Interacts with MARCHF2; the interaction leads to CFTR ubiqtuitination and degradation. Interacts with ADGRG2. In terms of processing, N-glycosylated. Post-translationally, phosphorylated; cAMP treatment promotes phosphorylation and activates the channel. Dephosphorylation decreases the ATPase activity (in vitro). Phosphorylation at PKA sites activates the channel. Phosphorylation at PKC sites enhances the response to phosphorylation by PKA. Phosphorylated by AMPK; this inhibits channel activity. Ubiquitinated, leading to its degradation in the lysosome. Deubiquitination by USP10 in early endosomes enhances its endocytic recycling to the cell membrane. Ubiquitinated by RNF185 during ER stress. Ubiquitinated by MARCHF2.

It localises to the apical cell membrane. The protein localises to the early endosome membrane. Its subcellular location is the cell membrane. It is found in the recycling endosome membrane. The protein resides in the endoplasmic reticulum membrane. It localises to the nucleus. The enzyme catalyses ATP + H2O + closed Cl(-) channel = ADP + phosphate + open Cl(-) channel.. It catalyses the reaction chloride(in) = chloride(out). It carries out the reaction hydrogencarbonate(in) = hydrogencarbonate(out). The catalysed reaction is ATP + H2O = ADP + phosphate + H(+). Functionally, epithelial ion channel that plays an important role in the regulation of epithelial ion and water transport and fluid homeostasis. Mediates the transport of chloride ions across the cell membrane. Possesses an intrinsic ATPase activity and utilizes ATP to gate its channel; the passive flow of anions through the channel is gated by cycles of ATP binding and hydrolysis by the ATP-binding domains. The ion channel is also permeable to HCO(3)(-); selectivity depends on the extracellular chloride concentration. Exerts its function also by modulating the activity of other ion channels and transporters. Contributes to the regulation of the pH and the ion content of the epithelial fluid layer. Modulates the activity of the epithelial sodium channel (ENaC) complex, in part by regulating the cell surface expression of the ENaC complex. May regulate bicarbonate secretion and salvage in epithelial cells by regulating the transporter SLC4A7. Can inhibit the chloride channel activity of ANO1. Plays a role in the chloride and bicarbonate homeostasis during sperm epididymal maturation and capacitation. The sequence is that of Cystic fibrosis transmembrane conductance regulator from Macaca fascicularis (Crab-eating macaque).